The sequence spans 316 residues: Probable metal transport system membrane protein TC_0342 (316 aa).

Helical transmembrane passes span 1–21, 39–59, 64–84, 94–114, 124–144, 171–191, 196–216, 226–246, 252–272, and 286–306; these read MFASISPYYGVSFFEFFIVFF, IQVIVFFAIAVSCSIIGTFLV, AMYANVVSHTILFGLVCACLF, QNLTIAAISTTLLTGASIHFI, ASTALVFSLLFSASLLLLVFL, FLVLLXNLGVSYCFFSSFICV, VFAFSLGIRVKLIDYLMMFLL, AVGVLMSLAFLLVPGLIAKLI, EMMGYSMIFGVLSALIAPALS, and SGLAVCLLLVFYIGTLATVFV.

It belongs to the ABC-3 integral membrane protein family.

It localises to the cell inner membrane. Its function is as follows. Part of an ATP-driven transport system TC_0338/TC_0339/TC_0341/TC_0342 for a metal. The sequence is that of Probable metal transport system membrane protein TC_0342 from Chlamydia muridarum (strain MoPn / Nigg).